The chain runs to 83 residues: Small ribosomal subunit protein bS16 (83 aa).

The protein belongs to the bacterial ribosomal protein bS16 family.

This chain is Small ribosomal subunit protein bS16, found in Pseudomonas fluorescens (strain ATCC BAA-477 / NRRL B-23932 / Pf-5).